A 559-amino-acid chain; its full sequence is Dihydroxy-acid dehydratase (559 aa).

[2Fe-2S] cluster is bound at residue Cys52. Asp84 contacts Mg(2+). A [2Fe-2S] cluster-binding site is contributed by Cys125. Mg(2+) is bound by residues Asp126 and Lys127. Lys127 is modified (N6-carboxylysine). Position 197 (Cys197) interacts with [2Fe-2S] cluster. Residue Glu447 coordinates Mg(2+). The active-site Proton acceptor is Ser473.

This sequence belongs to the IlvD/Edd family. Homodimer. The cofactor is [2Fe-2S] cluster. Requires Mg(2+) as cofactor.

The catalysed reaction is (2R)-2,3-dihydroxy-3-methylbutanoate = 3-methyl-2-oxobutanoate + H2O. It catalyses the reaction (2R,3R)-2,3-dihydroxy-3-methylpentanoate = (S)-3-methyl-2-oxopentanoate + H2O. The protein operates within amino-acid biosynthesis; L-isoleucine biosynthesis; L-isoleucine from 2-oxobutanoate: step 3/4. Its pathway is amino-acid biosynthesis; L-valine biosynthesis; L-valine from pyruvate: step 3/4. In terms of biological role, functions in the biosynthesis of branched-chain amino acids. Catalyzes the dehydration of (2R,3R)-2,3-dihydroxy-3-methylpentanoate (2,3-dihydroxy-3-methylvalerate) into 2-oxo-3-methylpentanoate (2-oxo-3-methylvalerate) and of (2R)-2,3-dihydroxy-3-methylbutanoate (2,3-dihydroxyisovalerate) into 2-oxo-3-methylbutanoate (2-oxoisovalerate), the penultimate precursor to L-isoleucine and L-valine, respectively. The sequence is that of Dihydroxy-acid dehydratase from Roseiflexus castenholzii (strain DSM 13941 / HLO8).